The following is a 269-amino-acid chain: Type II methyltransferase M2.LlaDCHI (269 aa).

It belongs to the N(4)/N(6)-methyltransferase family.

It catalyses the reaction a 2'-deoxyadenosine in DNA + S-adenosyl-L-methionine = an N(6)-methyl-2'-deoxyadenosine in DNA + S-adenosyl-L-homocysteine + H(+). In terms of biological role, a beta subtype methylase, recognizes the double-stranded sequence 5'-GATC-3', methylates A-2 on both strands, and protects the DNA from cleavage by the LlaDCHI endonuclease. This chain is Type II methyltransferase M2.LlaDCHI, found in Lactococcus lactis subsp. cremoris (Streptococcus cremoris).